A 431-amino-acid polypeptide reads, in one-letter code: Gamma-glutamyl phosphate reductase (431 aa).

It belongs to the gamma-glutamyl phosphate reductase family.

It is found in the cytoplasm. It catalyses the reaction L-glutamate 5-semialdehyde + phosphate + NADP(+) = L-glutamyl 5-phosphate + NADPH + H(+). The protein operates within amino-acid biosynthesis; L-proline biosynthesis; L-glutamate 5-semialdehyde from L-glutamate: step 2/2. Catalyzes the NADPH-dependent reduction of L-glutamate 5-phosphate into L-glutamate 5-semialdehyde and phosphate. The product spontaneously undergoes cyclization to form 1-pyrroline-5-carboxylate. In Methylobacterium sp. (strain 4-46), this protein is Gamma-glutamyl phosphate reductase.